A 273-amino-acid polypeptide reads, in one-letter code: Dermonecrotic toxin LsaSicTox-alphaIB1aiii (273 aa).

Residue histidine 5 is part of the active site. Positions 25 and 27 each coordinate Mg(2+). Catalysis depends on histidine 41, which acts as the Nucleophile. 2 cysteine pairs are disulfide-bonded: cysteine 45-cysteine 51 and cysteine 47-cysteine 190. Residue aspartate 85 coordinates Mg(2+).

Belongs to the arthropod phospholipase D family. Class II subfamily. Mg(2+) serves as cofactor. In terms of tissue distribution, expressed by the venom gland.

The protein resides in the secreted. The enzyme catalyses an N-(acyl)-sphingosylphosphocholine = an N-(acyl)-sphingosyl-1,3-cyclic phosphate + choline. It carries out the reaction an N-(acyl)-sphingosylphosphoethanolamine = an N-(acyl)-sphingosyl-1,3-cyclic phosphate + ethanolamine. The catalysed reaction is a 1-acyl-sn-glycero-3-phosphocholine = a 1-acyl-sn-glycero-2,3-cyclic phosphate + choline. It catalyses the reaction a 1-acyl-sn-glycero-3-phosphoethanolamine = a 1-acyl-sn-glycero-2,3-cyclic phosphate + ethanolamine. Its function is as follows. Dermonecrotic toxins cleave the phosphodiester linkage between the phosphate and headgroup of certain phospholipids (sphingolipid and lysolipid substrates), forming an alcohol (often choline) and a cyclic phosphate. This toxin acts on sphingomyelin (SM). It may also act on ceramide phosphoethanolamine (CPE), lysophosphatidylcholine (LPC) and lysophosphatidylethanolamine (LPE), but not on lysophosphatidylserine (LPS), and lysophosphatidylglycerol (LPG). It acts by transphosphatidylation, releasing exclusively cyclic phosphate products as second products. Induces dermonecrosis, hemolysis, increased vascular permeability, edema, inflammatory response, and platelet aggregation. This is Dermonecrotic toxin LsaSicTox-alphaIB1aiii from Loxosceles sabina (Tucson recluse spider).